Reading from the N-terminus, the 329-residue chain is COP9 signalosome complex subunit 6 (329 aa).

The 132-residue stretch at 44–175 (TRVKAQAACS…VTIYESELHV (132 aa)) folds into the MPN domain.

The protein belongs to the peptidase M67A family. CSN6 subfamily. As to quaternary structure, component of the CSN complex, probably composed of CSN1, CSN2, CSN3, CSN4, CSN5, CSN6, CSN7 and CSN8.

Component of the COP9 signalosome complex (CSN), a complex involved in various cellular and developmental processes such as photomorphogenesis and response to hormones. The CSN complex is an essential regulator of the ubiquitin (Ubl) conjugation pathway by mediating the deneddylation of the cullin subunits of SCF-type E3 ligase complexes, leading to decrease the Ubl ligase activity of SCF. Involved in early response to iron deficiency. The polypeptide is COP9 signalosome complex subunit 6 (Oryza sativa subsp. japonica (Rice)).